The following is a 687-amino-acid chain: Chloride channel protein ClC-Ka (687 aa).

4 helical membrane-spanning segments follow: residues 52–72, 161–181, 202–222, and 236–256; these read FLMTLGVLMALISYAMNFALG, LFLGKVGPFVHLSVMIAAYLG, VAGAAVGVATVFAAPFSGVLF, and YWRGFFAATCGAFMFRLLAVF. 4 residues coordinate Ca(2+): Glu259, Glu261, Asp278, and Glu281. 6 helical membrane-spanning segments follow: residues 282–302, 325–345, 396–416, 417–437, 452–472, and 486–506; these read IFFFVLLGAICGVASCAYLYC, PLYAALAATVLASITYPPGVG, FTIFGTLAFFLVMKFWMLILA, TTIPMPAGYFLPIFIIGAAIG, IVAGGVINPIMPGGYALAGAA, and LLAFELTGQIVHALPVLMAVL. Over 507 to 687 the chain is Cytoplasmic; that stretch reads AANAIAQSCQ…SALTNPPPAK (181 aa). CBS domains follow at residues 551–612 and 628–686; these read MRRA…ARAS and TEPV…PPPA.

Belongs to the chloride channel (TC 2.A.49) family. CLCNKA subfamily. As to quaternary structure, homodimer. Interacts with BSND. In terms of tissue distribution, expressed predominantly in the kidney.

It is found in the basolateral cell membrane. It carries out the reaction chloride(in) = chloride(out). The enzyme catalyses bromide(in) = bromide(out). It catalyses the reaction nitrate(in) = nitrate(out). The catalysed reaction is iodide(out) = iodide(in). Anion-selective channel permeable to small monovalent anions with ion selectivity for chloride &gt; bromide &gt; nitrate &gt; iodide. Forms a homodimeric channel where each subunit has its own ion conduction pathway. May conduct double-barreled currents controlled by two types of gates, two fast gates that control each subunit independently and a slow common gate that opens and shuts off both subunits simultaneously. Assembles with the regulatory subunit BSND/Barttin for sorting at the basolateral plasma membrane domain and functional switch to the ion conducting state. CLCNKA:BSND channels display mostly a linear current-voltage relationship with fast gating at negative potentials. Mediates transepithelial chloride transport from the lumen to interstitial compartment along the thin ascending limb of Henle's loop, contributing to generation of hypertonic medullary interstitium as a countercurrent system to achieve urine concentration. Conducts chloride currents in the stria vascularis of the inner ear to establish the endocochlear potential necessary for normal hearing. This Oryctolagus cuniculus (Rabbit) protein is Chloride channel protein ClC-Ka (CLCNKA).